We begin with the raw amino-acid sequence, 217 residues long: Large ribosomal subunit protein bL21m (217 aa).

Over residues 61–81 (PPKVTTATTPEAPAAVPTSTP) the composition is skewed to low complexity. The segment at 61 to 87 (PPKVTTATTPEAPAAVPTSTPFSQQPP) is disordered.

It belongs to the bacterial ribosomal protein bL21 family. In terms of assembly, component of the mitochondrial large ribosomal subunit (mt-LSU). Mature N.crassa 74S mitochondrial ribosomes consist of a small (37S) and a large (54S) subunit. The 37S small subunit contains a 16S ribosomal RNA (16S mt-rRNA) and 32 different proteins. The 54S large subunit contains a 23S rRNA (23S mt-rRNA) and 42 different proteins.

The protein localises to the mitochondrion. Component of the mitochondrial ribosome (mitoribosome), a dedicated translation machinery responsible for the synthesis of mitochondrial genome-encoded proteins, including at least some of the essential transmembrane subunits of the mitochondrial respiratory chain. The mitoribosomes are attached to the mitochondrial inner membrane and translation products are cotranslationally integrated into the membrane. The chain is Large ribosomal subunit protein bL21m (mrpl49) from Neurospora crassa (strain ATCC 24698 / 74-OR23-1A / CBS 708.71 / DSM 1257 / FGSC 987).